Reading from the N-terminus, the 127-residue chain is Thioredoxin domain-containing protein 8 (127 aa).

In terms of domain architecture, Thioredoxin spans 2–127 (VQKIKSMREF…KLEEKIQELM (126 aa)). An intrachain disulfide couples Cys-32 to Cys-35.

Belongs to the thioredoxin family. As to expression, testis-specific. Expressed in spermatozoa, sperm tail, elongated and round spermatids.

The protein resides in the cytoplasm. The protein localises to the golgi apparatus. May be required for post-translational modifications of proteins required for acrosomal biogenesis. May act by reducing disulfide bonds within the sperm. The sequence is that of Thioredoxin domain-containing protein 8 (Txndc8) from Rattus norvegicus (Rat).